The following is a 494-amino-acid chain: Transmembrane and coiled-coil domain-containing protein 6 (494 aa).

Residues 15-39 (GVEELRRRRREREAALRKARREQQL) are a coiled coil. The next 2 membrane-spanning stretches (helical) occupy residues 338-358 (LVAALFIFLQFFLQKQPALLP) and 386-406 (PLLQLLPLSNAVCMLVLTVLC).

Its subcellular location is the membrane. The chain is Transmembrane and coiled-coil domain-containing protein 6 (Tmco6) from Mus musculus (Mouse).